A 473-amino-acid polypeptide reads, in one-letter code: MSTSLETPSGTSAGPSIVASGLPPLADLVRAGSKRTRVVYGAETSAVEDDGLARANKIKLATKLAIEYKDVQTLPPILQAQQTGPAGPKRPTQPSIAASATAGPNVKLIGGPEAEKASSSTPQAVAEPRSLVKFRHQEGFAAEGGQATSRLSQALMRKKEAREVKPEYHPEWKLTRVISGHMGWVRAVAMDPGSQWFATGAGDRVIKIWDLASGELKLSLTGHISTIRGLAVSDRHPYLFSCAEDKMVKCWDLETNKVIRHYHGHFSGVYSLSVHPTLDVLVTGGRDASVRVWDMRTRANIFTLTGHTSTVGDVKTQDSDPQIISGSMDSTVRLWDLAAGKCMNTLTHHKKSVRALAIHPTEYSFASASSGGNNIKKWKCPEGIFVNNFVGHEAIINTLSINSENVLFSGADNGTLTLWDYKTGLPFQHLKDIPQPGSLDAEAGVFCSTFDKTGTRLITGGADKTIKVYSEQA.

The segment covering 1 to 14 (MSTSLETPSGTSAG) has biased composition (polar residues). Disordered stretches follow at residues 1–21 (MSTSLETPSGTSAGPSIVASG) and 103–126 (GPNVKLIGGPEAEKASSSTPQAVA). WD repeat units lie at residues 180–219 (GHMGWVRAVAMDPGSQWFATGAGDRVIKIWDLASGELKLS), 222–261 (GHISTIRGLAVSDRHPYLFSCAEDKMVKCWDLETNKVIRH), 264–303 (GHFSGVYSLSVHPTLDVLVTGGRDASVRVWDMRTRANIFT), 306–347 (GHTS…NTLT), 349–388 (HKKSVRALAIHPTEYSFASASSGGNNIKKWKCPEGIFVNN), 391–429 (GHEAIINTLSINSENVLFSGADNGTLTLWDYKTGLPFQH), and 440–473 (DAEAGVFCSTFDKTGTRLITGGADKTIKVYSEQA).

This sequence belongs to the WD repeat PRL1/PRL2 family. Associated with the spliceosome.

The protein resides in the cytoplasm. It is found in the nucleus. Its function is as follows. Involved in pre-mRNA splicing and required for cell cycle progression at G2/M. In Cryptococcus neoformans var. neoformans serotype D (strain B-3501A) (Filobasidiella neoformans), this protein is Pre-mRNA-splicing factor PRP46 (PRP46).